Consider the following 404-residue polypeptide: Cysteine desulfurase IscS (404 aa).

Residues 75–76 (AT), asparagine 155, glutamine 183, and 203–205 (SGH) contribute to the pyridoxal 5'-phosphate site. Lysine 206 carries the N6-(pyridoxal phosphate)lysine modification. Threonine 243 is a binding site for pyridoxal 5'-phosphate. The Cysteine persulfide intermediate role is filled by cysteine 328. Position 328 (cysteine 328) interacts with [2Fe-2S] cluster.

This sequence belongs to the class-V pyridoxal-phosphate-dependent aminotransferase family. NifS/IscS subfamily. As to quaternary structure, homodimer. Forms a heterotetramer with IscU, interacts with other sulfur acceptors. The cofactor is pyridoxal 5'-phosphate.

It is found in the cytoplasm. The catalysed reaction is (sulfur carrier)-H + L-cysteine = (sulfur carrier)-SH + L-alanine. It participates in cofactor biosynthesis; iron-sulfur cluster biosynthesis. Functionally, master enzyme that delivers sulfur to a number of partners involved in Fe-S cluster assembly, tRNA modification or cofactor biosynthesis. Catalyzes the removal of elemental sulfur atoms from cysteine to produce alanine. Functions as a sulfur delivery protein for Fe-S cluster synthesis onto IscU, an Fe-S scaffold assembly protein, as well as other S acceptor proteins. The polypeptide is Cysteine desulfurase IscS (Shewanella baltica (strain OS155 / ATCC BAA-1091)).